Consider the following 356-residue polypeptide: DNA polymerase IV (356 aa).

The region spanning 6 to 187 (IIHIDMDYFF…LDIGDFPGVG (182 aa)) is the UmuC domain. 2 residues coordinate Mg(2+): Asp-10 and Asp-105. The active site involves Glu-106.

Belongs to the DNA polymerase type-Y family. Monomer. The cofactor is Mg(2+).

It is found in the cytoplasm. The catalysed reaction is DNA(n) + a 2'-deoxyribonucleoside 5'-triphosphate = DNA(n+1) + diphosphate. Functionally, poorly processive, error-prone DNA polymerase involved in untargeted mutagenesis. Copies undamaged DNA at stalled replication forks, which arise in vivo from mismatched or misaligned primer ends. These misaligned primers can be extended by PolIV. Exhibits no 3'-5' exonuclease (proofreading) activity. May be involved in translesional synthesis, in conjunction with the beta clamp from PolIII. The chain is DNA polymerase IV from Staphylococcus epidermidis (strain ATCC 12228 / FDA PCI 1200).